A 228-amino-acid chain; its full sequence is Non-fluorescent flavoprotein (228 aa).

Belongs to the bacterial luciferase oxidoreductase family. In terms of assembly, homodimer. FMN is required as a cofactor.

The sequence is that of Non-fluorescent flavoprotein (luxF) from Photobacterium leiognathi.